We begin with the raw amino-acid sequence, 331 residues long: tRNA (guanine-N(1)-)-methyltransferase (331 aa).

Low complexity-rich tracts occupy residues 77 to 99 (GSDT…QATR) and 107 to 134 (AQPG…GRAA). Positions 77 to 137 (GSDTTARSGS…PGAGRAASSR (61 aa)) are disordered. S-adenosyl-L-methionine is bound by residues glycine 169 and 193–198 (LGDYVL). Residues 312-331 (WQRCSPAPSEQAPEGARDMA) form a disordered region.

This sequence belongs to the RNA methyltransferase TrmD family. In terms of assembly, homodimer.

It localises to the cytoplasm. It catalyses the reaction guanosine(37) in tRNA + S-adenosyl-L-methionine = N(1)-methylguanosine(37) in tRNA + S-adenosyl-L-homocysteine + H(+). Its function is as follows. Specifically methylates guanosine-37 in various tRNAs. This chain is tRNA (guanine-N(1)-)-methyltransferase, found in Kocuria rhizophila (strain ATCC 9341 / DSM 348 / NBRC 103217 / DC2201).